A 1030-amino-acid chain; its full sequence is Peroxisomal ATPase PEX6 (1030 aa).

Residues 478 to 683 (VLLHSTTNNV…VETARMTATA (206 aa)) form an AAA-cassette D1 region. Positions 767–956 (GILFYGPPGT…CSDAMLNAMS (190 aa)) are AAA-cassette D2. 772–779 (GPPGTGKT) lines the ATP pocket.

Belongs to the AAA ATPase family. Interacts with PEX1; forming the PEX1-PEX6 AAA ATPase complex, which is composed of a heterohexamer formed by a trimer of PEX1-PEX6 dimers. Interacts with PEX15; anchors PEX1-PEX6 heterooligomers to the peroxisomal membrane and mediates their association with the peroxisomal importomer. Interacts with UBP15.

The protein resides in the cytoplasm. It is found in the cytosol. It localises to the peroxisome membrane. The catalysed reaction is ATP + H2O = ADP + phosphate + H(+). Functionally, component of the PEX1-PEX6 AAA ATPase complex, a protein dislocase complex that mediates the ATP-dependent extraction of the PEX5 receptor from peroxisomal membranes, an essential step for PEX5 recycling. Specifically recognizes PEX5 monoubiquitinated at 'Cys-6', and pulls it out of the peroxisome lumen through the PEX2-PEX10-PEX12 retrotranslocation channel. Extraction by the PEX1-PEX6 AAA ATPase complex is accompanied by unfolding of the TPR repeats and release of bound cargo from PEX5. This chain is Peroxisomal ATPase PEX6, found in Saccharomyces cerevisiae (strain ATCC 204508 / S288c) (Baker's yeast).